The chain runs to 224 residues: Orotidine 5'-phosphate decarboxylase (224 aa).

Residues Asp-10, Lys-32, 59 to 68, Thr-115, Arg-175, Gln-184, Gly-204, and Arg-205 contribute to the substrate site; that span reads DLKLHDIPNT. Lys-61 functions as the Proton donor in the catalytic mechanism.

This sequence belongs to the OMP decarboxylase family. Type 1 subfamily. In terms of assembly, homodimer.

The catalysed reaction is orotidine 5'-phosphate + H(+) = UMP + CO2. Its pathway is pyrimidine metabolism; UMP biosynthesis via de novo pathway; UMP from orotate: step 2/2. Functionally, catalyzes the decarboxylation of orotidine 5'-monophosphate (OMP) to uridine 5'-monophosphate (UMP). The polypeptide is Orotidine 5'-phosphate decarboxylase (Novosphingobium aromaticivorans (strain ATCC 700278 / DSM 12444 / CCUG 56034 / CIP 105152 / NBRC 16084 / F199)).